Consider the following 154-residue polypeptide: MAKKNGLTELEQLKKENEELRKKLEELEALINNDSDDDEELQEIENPYTVTNRAIDELVSPKDTMFYLSGNQISLILSAFEFARLPTYFGEEPVTELAEYAHKLKHYLVSKGGRGRRDILRVLRVSSGQTRENVNKSILKQLFDHGKEHEDEEE.

Its function is as follows. This protein may be involved in virus assembly. Essential for virus function. This is an uncharacterized protein from Saccharolobus solfataricus (Sulfolobus solfataricus).